The chain runs to 235 residues: 2-C-methyl-D-erythritol 4-phosphate cytidylyltransferase (235 aa).

This sequence belongs to the IspD/TarI cytidylyltransferase family. IspD subfamily.

It carries out the reaction 2-C-methyl-D-erythritol 4-phosphate + CTP + H(+) = 4-CDP-2-C-methyl-D-erythritol + diphosphate. Its pathway is isoprenoid biosynthesis; isopentenyl diphosphate biosynthesis via DXP pathway; isopentenyl diphosphate from 1-deoxy-D-xylulose 5-phosphate: step 2/6. Functionally, catalyzes the formation of 4-diphosphocytidyl-2-C-methyl-D-erythritol from CTP and 2-C-methyl-D-erythritol 4-phosphate (MEP). The polypeptide is 2-C-methyl-D-erythritol 4-phosphate cytidylyltransferase (Synechococcus sp. (strain JA-3-3Ab) (Cyanobacteria bacterium Yellowstone A-Prime)).